Consider the following 146-residue polypeptide: Deoxyuridine 5'-triphosphate nucleotidohydrolase (146 aa).

Residues Arg-65–Gly-67, Asn-78, Leu-82–Asp-84, and Met-92 each bind substrate.

This sequence belongs to the dUTPase family. Requires Mg(2+) as cofactor.

The enzyme catalyses dUTP + H2O = dUMP + diphosphate + H(+). Its pathway is pyrimidine metabolism; dUMP biosynthesis; dUMP from dCTP (dUTP route): step 2/2. Functionally, this enzyme is involved in nucleotide metabolism: it produces dUMP, the immediate precursor of thymidine nucleotides and it decreases the intracellular concentration of dUTP so that uracil cannot be incorporated into DNA. This Thiobacillus denitrificans (strain ATCC 25259 / T1) protein is Deoxyuridine 5'-triphosphate nucleotidohydrolase.